A 122-amino-acid polypeptide reads, in one-letter code: Large ribosomal subunit protein uL14 (122 aa).

It belongs to the universal ribosomal protein uL14 family. As to quaternary structure, part of the 50S ribosomal subunit. Forms a cluster with proteins L3 and L19. In the 70S ribosome, L14 and L19 interact and together make contacts with the 16S rRNA in bridges B5 and B8.

Functionally, binds to 23S rRNA. Forms part of two intersubunit bridges in the 70S ribosome. In Borreliella afzelii (strain PKo) (Borrelia afzelii), this protein is Large ribosomal subunit protein uL14.